A 221-amino-acid chain; its full sequence is Probable transaldolase (221 aa).

The Schiff-base intermediate with substrate role is filled by lysine 83.

It belongs to the transaldolase family. Type 3B subfamily.

It is found in the cytoplasm. The catalysed reaction is D-sedoheptulose 7-phosphate + D-glyceraldehyde 3-phosphate = D-erythrose 4-phosphate + beta-D-fructose 6-phosphate. The protein operates within carbohydrate degradation; pentose phosphate pathway; D-glyceraldehyde 3-phosphate and beta-D-fructose 6-phosphate from D-ribose 5-phosphate and D-xylulose 5-phosphate (non-oxidative stage): step 2/3. Its function is as follows. Transaldolase is important for the balance of metabolites in the pentose-phosphate pathway. The polypeptide is Probable transaldolase (Petrotoga mobilis (strain DSM 10674 / SJ95)).